We begin with the raw amino-acid sequence, 35 residues long: Malate dehydrogenase, mitochondrial (35 aa).

Asparagine 7 contacts NAD(+). Substrate is bound at residue arginine 23.

It belongs to the LDH/MDH superfamily. MDH type 1 family. As to quaternary structure, homodimer.

The protein resides in the mitochondrion matrix. It carries out the reaction (S)-malate + NAD(+) = oxaloacetate + NADH + H(+). The protein is Malate dehydrogenase, mitochondrial of Capsicum annuum var. annuum (Red pepper).